The primary structure comprises 59 residues: Cytochrome c oxidase subunit 7 (59 aa).

Residues 1–24 (MKNTIVQQQRFLQSIHKPTYLQRP) are Mitochondrial matrix-facing. A helical transmembrane segment spans residues 25 to 47 (GSFALVYPYYAVMAGLGLYSLYA). The Mitochondrial intermembrane segment spans residues 48 to 59 (SGRVIFGKKDAF).

Belongs to the cytochrome c oxidase subunit 7 family. In terms of assembly, component of the cytochrome c oxidase (complex IV, CIV), a multisubunit enzyme composed of a catalytic core of 3 subunits and several supernumerary subunits. The complex exists as a monomer or a dimer and forms supercomplexes (SCs) in the inner mitochondrial membrane with ubiquinol-cytochrome c oxidoreductase (cytochrome b-c1 complex, complex III, CIII).

Its subcellular location is the mitochondrion inner membrane. It functions in the pathway energy metabolism; oxidative phosphorylation. Functionally, component of the cytochrome c oxidase, the last enzyme in the mitochondrial electron transport chain which drives oxidative phosphorylation. The respiratory chain contains 3 multisubunit complexes succinate dehydrogenase (complex II, CII), ubiquinol-cytochrome c oxidoreductase (cytochrome b-c1 complex, complex III, CIII) and cytochrome c oxidase (complex IV, CIV), that cooperate to transfer electrons derived from NADH and succinate to molecular oxygen, creating an electrochemical gradient over the inner membrane that drives transmembrane transport and the ATP synthase. Cytochrome c oxidase is the component of the respiratory chain that catalyzes the reduction of oxygen to water. Electrons originating from reduced cytochrome c in the intermembrane space (IMS) are transferred via the dinuclear copper A center (CU(A)) of subunit 2 and heme A of subunit 1 to the active site in subunit 1, a binuclear center (BNC) formed by heme A3 and copper B (CU(B)). The BNC reduces molecular oxygen to 2 water molecules using 4 electrons from cytochrome c in the IMS and 4 protons from the mitochondrial matrix. The sequence is that of Cytochrome c oxidase subunit 7 (cox7) from Schizosaccharomyces pombe (strain 972 / ATCC 24843) (Fission yeast).